Here is a 321-residue protein sequence, read N- to C-terminus: Basic peroxidase (321 aa).

The signal sequence occupies residues 1–30 (MSYHKSSGTTLMVPLFMLLISVNYFMSCNA). Gln31 carries the post-translational modification Pyrrolidone carboxylic acid. 4 cysteine pairs are disulfide-bonded: Cys41/Cys117, Cys74/Cys79, Cys123/Cys317, and Cys202/Cys228. His72 serves as the catalytic Proton acceptor. Asp73, Val76, Gly78, Asp80, and Ser82 together coordinate Ca(2+). Pro165 contributes to the substrate binding site. A heme b-binding site is contributed by His195. Thr196 provides a ligand contact to Ca(2+). Asn211 and Asn221 each carry an N-linked (GlcNAc...) asparagine glycan. Residues Asp241, Thr244, and Asp249 each contribute to the Ca(2+) site.

This sequence belongs to the peroxidase family. Classical plant (class III) peroxidase subfamily. It depends on heme b as a cofactor. Requires Ca(2+) as cofactor. Post-translationally, N-glycosylated. As to expression, expressed in tracheary elements, roots, young and old hypocotyls, and stems in the partially glycosylated form and in roots and young hypocotyls in the fully glycosylated form. None of the isoforms is significantly expressed in leaves or cotyledons.

The protein localises to the secreted. The catalysed reaction is 2 a phenolic donor + H2O2 = 2 a phenolic radical donor + 2 H2O. Its function is as follows. Removal of H(2)O(2), oxidation of toxic reductants, biosynthesis and degradation of lignin, suberization, auxin catabolism, response to environmental stresses such as wounding, pathogen attack and oxidative stress. These functions might be dependent on each isozyme/isoform in each plant tissue. Involved in the synthesis of highly polymerized lignins. The chain is Basic peroxidase (POD3) from Zinnia elegans (Garden zinnia).